The sequence spans 218 residues: Cytochrome b6 (218 aa).

A helical transmembrane segment spans residues 35–55 (IFYCLGGITLVCFLIQFATGF). Cys-38 contacts heme c. Heme b-binding residues include His-89 and His-103. 3 helical membrane passes run 93-113 (ASMMVLMLILHVFRVYLTGGF), 119-139 (LTWVTGVTMAVITVSFGVTGY), and 189-209 (LHTFVMPWLLAVFMLMHFLMI). The heme b site is built by His-190 and His-205.

This sequence belongs to the cytochrome b family. PetB subfamily. The 4 large subunits of the cytochrome b6-f complex are cytochrome b6, subunit IV (17 kDa polypeptide, PetD), cytochrome f and the Rieske protein, while the 4 small subunits are PetG, PetL, PetM and PetN. The complex functions as a dimer. The cofactor is heme b. Heme c is required as a cofactor.

It is found in the cellular thylakoid membrane. Its function is as follows. Component of the cytochrome b6-f complex, which mediates electron transfer between photosystem II (PSII) and photosystem I (PSI), cyclic electron flow around PSI, and state transitions. This chain is Cytochrome b6, found in Synechococcus sp. (strain WH7803).